A 701-amino-acid polypeptide reads, in one-letter code: Polyribonucleotide nucleotidyltransferase (701 aa).

Mg(2+) contacts are provided by Asp-487 and Asp-493. A KH domain is found at Pro-554–Ile-613. One can recognise an S1 motif domain in the interval Gly-623–Lys-691.

Belongs to the polyribonucleotide nucleotidyltransferase family. As to quaternary structure, component of the RNA degradosome, which is a multiprotein complex involved in RNA processing and mRNA degradation. The cofactor is Mg(2+).

The protein resides in the cytoplasm. The catalysed reaction is RNA(n+1) + phosphate = RNA(n) + a ribonucleoside 5'-diphosphate. Functionally, involved in mRNA degradation. Catalyzes the phosphorolysis of single-stranded polyribonucleotides processively in the 3'- to 5'-direction. This is Polyribonucleotide nucleotidyltransferase from Pseudomonas putida (Arthrobacter siderocapsulatus).